Here is an 84-residue protein sequence, read N- to C-terminus: Large ribosomal subunit protein bL31B (84 aa).

The protein belongs to the bacterial ribosomal protein bL31 family. Type B subfamily. Part of the 50S ribosomal subunit.

The protein is Large ribosomal subunit protein bL31B of Alkalilimnicola ehrlichii (strain ATCC BAA-1101 / DSM 17681 / MLHE-1).